A 208-amino-acid polypeptide reads, in one-letter code: Single-stranded DNA-binding protein DdrA (208 aa).

Belongs to the RAD52 family. As to quaternary structure, homooligomer composed of 8 to 10 subunits; probably arranged in a ring-structure.

SsDNA-binding protein that contributes to the ionizing radiation resistance of D.radiodurans. Plays a role in DNA repair and genome reconstitution, in a RecA-independent process, since DdrA is essential for recovery from severe genomic fragmentation as a result of exposure to severe levels of ionizing radiation in an environment lacking nutrients. In vitro, binds to the 3'-ends of single-stranded DNA, protecting them from nuclease degradation. Thus, DdrA is part of a DNA end-protection system that helps to preserve genome integrity following irradiation or desiccation. Does not display DNA strand annealing activity, unlike eukaryotic Rad52 protein homologs. The protein is Single-stranded DNA-binding protein DdrA (ddrA) of Deinococcus radiodurans (strain ATCC 13939 / DSM 20539 / JCM 16871 / CCUG 27074 / LMG 4051 / NBRC 15346 / NCIMB 9279 / VKM B-1422 / R1).